Consider the following 75-residue polypeptide: Endogenous retrovirus group K member 5 Np9 protein (75 aa).

A disordered region spans residues 22-43 (TAPKRQRPSRTGHDDDGGFVEK). A compositionally biased stretch (basic and acidic residues) spans 32–43 (TGHDDDGGFVEK).

It localises to the nucleus. Its function is as follows. May possess a function in tumorigenesis. In Homo sapiens (Human), this protein is Endogenous retrovirus group K member 5 Np9 protein (ERVK-5).